Consider the following 88-residue polypeptide: Small ribosomal subunit protein bS16c (88 aa).

Belongs to the bacterial ribosomal protein bS16 family.

It localises to the plastid. The protein resides in the chloroplast. This Citrus sinensis (Sweet orange) protein is Small ribosomal subunit protein bS16c.